Reading from the N-terminus, the 623-residue chain is Oviduct-specific glycoprotein (623 aa).

A signal peptide spans 1–21; that stretch reads MWKLLLWVGLVLVLKHHDGAA. The GH18 domain maps to 22–385; the sequence is HKLVCYFTNW…YVMNDILVRA (364 aa). Residues Cys-26 and Cys-51 are joined by a disulfide bond. Chitin is bound by residues 71-72, 98-101, Tyr-142, 211-214, and Trp-355; these read LQ, GGWN, and LSYD. Asn-402 and Asn-441 each carry an N-linked (GlcNAc...) asparagine glycan. Disordered stretches follow at residues 539–558 and 594–623; these read LTPVGHPSVTPVSHQSVSPG and RKISVTPEGQTVPLRGEYLTSETGTHPQDG. Over residues 613–623 the composition is skewed to polar residues; that stretch reads TSETGTHPQDG.

The protein belongs to the glycosyl hydrolase 18 family. As to expression, oviduct.

Its subcellular location is the cytoplasmic vesicle. It localises to the secretory vesicle. Binds to oocyte zona pellucida in vivo. May play a role in the fertilization process and/or early embryonic development. The polypeptide is Oviduct-specific glycoprotein (OVGP1) (Papio anubis (Olive baboon)).